Consider the following 262-residue polypeptide: Demethyldecarbamoylnovobiocin O-methyltransferase (262 aa).

An S-adenosyl-L-methionine-binding site is contributed by 64–65 (TM). The Proton acceptor role is filled by glutamate 72. S-adenosyl-L-methionine is bound by residues 92–96 (ETGVW), 122–126 (DSFQG), phenylalanine 178, 196–197 (DG), and serine 202. Residue aspartate 196 coordinates Mg(2+). Mg(2+) is bound by residues aspartate 223 and aspartate 224.

Belongs to the methyltransferase TylF/MycF family. Homodimer. Requires Mg(2+) as cofactor.

The catalysed reaction is desmethyldescarbamoylnovobiocin + S-adenosyl-L-methionine = descarbamoylnovobiocin + S-adenosyl-L-homocysteine + H(+). It participates in antibiotic biosynthesis; novobiocin biosynthesis. In terms of biological role, S-adenosyl-L-methionine-dependent O-methyltransferase that methylates at 4-OH of the noviose moiety, the penultimate step in the novobiocin biosynthesis pathway. Novobiocin is an aminocoumarin family antibiotic that targets bacterial DNA gyrases. The protein is Demethyldecarbamoylnovobiocin O-methyltransferase (novP) of Streptomyces niveus (Streptomyces spheroides).